The primary structure comprises 435 residues: Ribosomal protein uS12 methylthiotransferase RimO (435 aa).

The MTTase N-terminal domain occupies 3-113 (HKVGFVSLGC…VVNAVHQHLP (111 aa)). [4Fe-4S] cluster is bound by residues cysteine 12, cysteine 48, cysteine 77, cysteine 144, cysteine 148, and cysteine 151. The Radical SAM core domain occupies 130-367 (LTPRHYAYLK…MQVQAEISRN (238 aa)). The TRAM domain maps to 370-435 (KNKIGSTQTV…DDYDLYASLV (66 aa)).

This sequence belongs to the methylthiotransferase family. RimO subfamily. [4Fe-4S] cluster serves as cofactor.

The protein localises to the cytoplasm. It carries out the reaction L-aspartate(89)-[ribosomal protein uS12]-hydrogen + (sulfur carrier)-SH + AH2 + 2 S-adenosyl-L-methionine = 3-methylsulfanyl-L-aspartate(89)-[ribosomal protein uS12]-hydrogen + (sulfur carrier)-H + 5'-deoxyadenosine + L-methionine + A + S-adenosyl-L-homocysteine + 2 H(+). Its function is as follows. Catalyzes the methylthiolation of an aspartic acid residue of ribosomal protein uS12. This is Ribosomal protein uS12 methylthiotransferase RimO from Legionella pneumophila (strain Lens).